The chain runs to 248 residues: Triosephosphate isomerase (248 aa).

9 to 11 (NWK) is a binding site for substrate. Catalysis depends on histidine 94, which acts as the Electrophile. The Proton acceptor role is filled by glutamate 166. Residues glycine 172, serine 212, and 233–234 (GG) each bind substrate.

Belongs to the triosephosphate isomerase family. As to quaternary structure, homodimer.

Its subcellular location is the cytoplasm. The enzyme catalyses D-glyceraldehyde 3-phosphate = dihydroxyacetone phosphate. It functions in the pathway carbohydrate biosynthesis; gluconeogenesis. It participates in carbohydrate degradation; glycolysis; D-glyceraldehyde 3-phosphate from glycerone phosphate: step 1/1. Involved in the gluconeogenesis. Catalyzes stereospecifically the conversion of dihydroxyacetone phosphate (DHAP) to D-glyceraldehyde-3-phosphate (G3P). This Clostridium perfringens (strain ATCC 13124 / DSM 756 / JCM 1290 / NCIMB 6125 / NCTC 8237 / Type A) protein is Triosephosphate isomerase.